We begin with the raw amino-acid sequence, 309 residues long: Taste receptor type 2 member 8 (309 aa).

At 1–7 (MFSPADN) the chain is on the extracellular side. Residues 8-28 (IFIILITGEFILGILGNGYIA) form a helical membrane-spanning segment. The Cytoplasmic portion of the chain corresponds to 29–50 (LVNWIDWIKKKKISTTDYILTN). The helical transmembrane segment at 51–71 (LVISRICLISVIVVNGIVTVL) threads the bilayer. Topologically, residues 72–82 (YPDVYTKSKLQ) are extracellular. The chain crosses the membrane as a helical span at residues 83–103 (IAISTFWTFANYLNMWFTTCL). Topologically, residues 104–131 (NVFYFLKIANSSHPLFLWLKQKIDMVVR) are cytoplasmic. Residues 132–152 (WILLGCFAISLLVSLIIAIVL) form a helical membrane-spanning segment. The Extracellular portion of the chain corresponds to 153-184 (SRDYRFHAIAKHKRNITEMFHVSKMLYFEPLT). N-linked (GlcNAc...) asparagine glycosylation is present at asparagine 167. Residues 185–205 (LFNLLAIVPFIVSLMSFFLLV) form a helical membrane-spanning segment. Topologically, residues 206–239 (RSLQRHTKQIKLYATGGRDPSTEAHVRAIKTMTS) are cytoplasmic. The chain crosses the membrane as a helical span at residues 240–260 (FIFFFFLYYITSLLVTFSYLM). The Extracellular segment spans residues 261–266 (TKYKLA). A helical membrane pass occupies residues 267–287 (MAFGEIVAILYPSGHSFILII). Topologically, residues 288–309 (LNNKLRQASVRMLTCIKITCVI) are cytoplasmic.

This sequence belongs to the G-protein coupled receptor T2R family.

The protein localises to the membrane. Receptor that may play a role in the perception of bitterness and is gustducin-linked. May play a role in sensing the chemical composition of the gastrointestinal content. The activity of this receptor may stimulate alpha gustducin, mediate PLC-beta-2 activation and lead to the gating of TRPM5. This is Taste receptor type 2 member 8 (TAS2R8) from Pongo pygmaeus (Bornean orangutan).